The chain runs to 515 residues: Maturase K (515 aa).

The protein belongs to the intron maturase 2 family. MatK subfamily.

The protein resides in the plastid. Its subcellular location is the chloroplast. Functionally, usually encoded in the trnK tRNA gene intron. Probably assists in splicing its own and other chloroplast group II introns. The chain is Maturase K from Helonias bullata (Swamp pink).